A 148-amino-acid chain; its full sequence is Deoxyuridine 5'-triphosphate nucleotidohydrolase (148 aa).

Residues 68 to 70, asparagine 81, 85 to 87, and lysine 95 each bind substrate; these read RSG and TID.

This sequence belongs to the dUTPase family. Requires Mg(2+) as cofactor.

It carries out the reaction dUTP + H2O = dUMP + diphosphate + H(+). The protein operates within pyrimidine metabolism; dUMP biosynthesis; dUMP from dCTP (dUTP route): step 2/2. In terms of biological role, this enzyme is involved in nucleotide metabolism: it produces dUMP, the immediate precursor of thymidine nucleotides and it decreases the intracellular concentration of dUTP so that uracil cannot be incorporated into DNA. The polypeptide is Deoxyuridine 5'-triphosphate nucleotidohydrolase (Rickettsia rickettsii (strain Iowa)).